We begin with the raw amino-acid sequence, 543 residues long: Glucose-6-phosphate isomerase (543 aa).

Glutamate 351 (proton donor) is an active-site residue. Active-site residues include histidine 382 and lysine 511.

This sequence belongs to the GPI family.

Its subcellular location is the cytoplasm. The catalysed reaction is alpha-D-glucose 6-phosphate = beta-D-fructose 6-phosphate. It participates in carbohydrate biosynthesis; gluconeogenesis. The protein operates within carbohydrate degradation; glycolysis; D-glyceraldehyde 3-phosphate and glycerone phosphate from D-glucose: step 2/4. Catalyzes the reversible isomerization of glucose-6-phosphate to fructose-6-phosphate. The protein is Glucose-6-phosphate isomerase of Hydrogenovibrio crunogenus (strain DSM 25203 / XCL-2) (Thiomicrospira crunogena).